The chain runs to 924 residues: MMPKRFNTSGFDTTLRLPSYYGFLHLTQSLTLNSRVFYGARHVTPPAIRIGSNPVQSLLLFRAPTQLTGWNRSSRDLLGRRVSFSDRSDGVDLLSSSPILSTNPNLDDSLTVIALPLPHKPLIPGFYMPIHVKDPKVLAALQESTRQQSPYVGAFLLKDCASTDSSSRSETEDNVVEKFKVKGKPKKKRRKELLNRIHQVGTLAQISSIQGEQVILVGRRRLIIEEMVSEDPLTVRVDHLKDKPYDKDNAVIKASYVEVISTLREVLKTNSLWRDQDIGDFSYQHLADFGAGISGANKHKNQGVLTELDVHKRLELTLELVKKQVEINKIKETDDGSSLSAKIRVRIDTKRDKIPKHVIKVMEEEFTKLEMLEENYSDFDLTYNYLHWLTVLPWGNFSYENFDVLRAKKILDEDHYGLSDVKERILEFIAVGRLRGTSQGKIICLSGPPGVGKTSIGRSIARALDRKFFRFSVGGLSDVAEIKGHCQTYVGAMPGKMVQCLKSVGTANPLILFDEIDKLGRCHTGDPASALLEVMDPEQNAKFLDHFLNVTIDLSKVLFVCTANVIEMIPGPLLDRMEVIDLSGYVTDEKMHIARDYLVKKTCRDCGIKPEHVDLSDAALLSLIENYCREAGVRNLQKQIEKIYRKVALELVRQGAVSFDVTDTKDTKSLAKTDSEVKRMKVADIMKILESATGDSTESKTKQSGLVAKTFEKVMIDESNLADYVGKPVFQEEKIYEQTPVGVVMGLAWTSMGGSTLYIETTFVEEGLGKGGLHITGQLGDVMKESAQIAHTVARRIMFEKEPENLFFANSKLHLHVPEGATPKDGPSAGCTMITSFLSLAMKKLVRKDLAMTGEVTLTGRILPIGGVKEKTIAARRSQIKTIIFPEANRRDFEELAENMKEGLDVHFVDEYEKIFDLAFNYDH.

A mitochondrion-targeting transit peptide spans 1 to 63 (MMPKRFNTSG…PVQSLLLFRA (63 aa)). The 214-residue stretch at 112–325 (VIALPLPHKP…LTLELVKKQV (214 aa)) folds into the Lon N-terminal domain. 447-454 (GPPGVGKT) contacts ATP. A Lon proteolytic domain is found at 738-922 (QTPVGVVMGL…EKIFDLAFNY (185 aa)). Active-site residues include serine 828 and lysine 871.

The protein belongs to the peptidase S16 family. Homohexamer or homoheptamer. Organized in a ring with a central cavity.

Its subcellular location is the mitochondrion matrix. The enzyme catalyses Hydrolysis of proteins in presence of ATP.. In terms of biological role, ATP-dependent serine protease that mediates the selective degradation of misfolded, unassembled or oxidatively damaged polypeptides as well as certain short-lived regulatory proteins in the mitochondrial matrix. May also have a chaperone function in the assembly of inner membrane protein complexes. Participates in the regulation of mitochondrial gene expression and in the maintenance of the integrity of the mitochondrial genome. Binds to mitochondrial DNA in a site-specific manner. This chain is Lon protease homolog 3, mitochondrial (LON3), found in Arabidopsis thaliana (Mouse-ear cress).